A 115-amino-acid polypeptide reads, in one-letter code: Phosphorelay protein LuxU (115 aa).

Residues 17–107 (GADNVPVLLE…DRLHQTQQAY (91 aa)) form the HPt domain. The residue at position 56 (histidine 56) is a Phosphohistidine.

In terms of assembly, monomer.

Functionally, phosphorelay protein which receives a sensory signal from a sensor kinase and transmit it to LuxO. At low cell density, a phosphoryl group is transferred from the sensor kinase, probably on His-56 and this phosphoryl group is further transferred to LuxO. The protein is Phosphorelay protein LuxU (luxU) of Vibrio vulnificus (strain CMCP6).